Consider the following 299-residue polypeptide: MDATFPSQRNITTRPAPDRIRREKCKLAKRLRRQVGQAIADFGMIEANDKIMVCLSGGKDSYTLLDMLLQLRAKAPVPFELTAVNLDQKQPGFPKHVLPEYLSSIGVPYHIIEQDTYSVVTRVVPEGKTLCALCSRMRRGALYAYAETQGFTKIALGHHRDDMVATFFMNLFHHAKLSGMPPKLRSDNGKHVVIRPLAYVSETDIIAYADAREFPIIPCNLCGSQENLQRKQVGVMLKAWEKEYPSRIEQIARALGNIRPSQLADQSLFDFLALGRHSNTPLPNAHAWLAGDLANDTAP.

Residues 56–61 (SGGKDS) carry the PP-loop motif motif. [4Fe-4S] cluster is bound by residues Cys-131, Cys-134, and Cys-222.

This sequence belongs to the TtcA family. Homodimer. It depends on Mg(2+) as a cofactor. The cofactor is [4Fe-4S] cluster.

It is found in the cytoplasm. It catalyses the reaction cytidine(32) in tRNA + S-sulfanyl-L-cysteinyl-[cysteine desulfurase] + AH2 + ATP = 2-thiocytidine(32) in tRNA + L-cysteinyl-[cysteine desulfurase] + A + AMP + diphosphate + H(+). The protein operates within tRNA modification. Functionally, catalyzes the ATP-dependent 2-thiolation of cytidine in position 32 of tRNA, to form 2-thiocytidine (s(2)C32). The sulfur atoms are provided by the cysteine/cysteine desulfurase (IscS) system. The polypeptide is tRNA-cytidine(32) 2-sulfurtransferase (Xylella fastidiosa (strain M12)).